Consider the following 1023-residue polypeptide: MGLGKGKDEYKLAATSEDGGKKDKKAKAKKDMDDLKKEVDLDDHKLTLDELHRKYGTDLTRGLSSSRAKEILARDGPNALTPPPTTPEWVKFCKQLFGGFSMLLWIGAILCFLAYGIQAASEDEPANDNLYLGIVLSAVVIITGCFSYYQEAKSSKIMESFKNLVPRQALGIRDGEKKNINAEEVVLGDLVEVKGGDRIPADLRIISAHGCKVDNSSLTGESEPQTRSPDFSNENPLETRNISFFSTNCIEGTARGIVINTEDRTVMGRIATLASSLEGGKTPIAIEIEHFIHIITGVAVFLGVSFFILSLILGYNWLEAVIFLIGIIVANVPEGLLATVTVCLTLTAKRMAKKNCLVKNLEAVETLGSTSTICSDKTGTLTQNRMTVAHMWFDNQIHEADTTENQSGTSFDRSSATWANLSRIAGLCNRAVFLADQSNIPILKRDVAGDASEAALLKCIELCCGSVNEMREKYPKIAEIPFNSTNKYQLSIHKNTTPGETKHLLVMKGAPERILDRCNSIVLQGKVQALDDEMKDAFQNAYVELGGLGERVLGFCHYHLPDDEFPEGFAFDTDEVNFPTENLCFVGLMAMIDPPRAAVPDAVGKCRSAGIKVIMVTGDHPITAKAIAKGVGIISEGNETVEDIAARLNVPVSEVNPRDAKACVVHGSELKDMTSEELDDLLKHHTEIVFARTSPQQKLIIVEGCQRQGAIVAVTGDGVNDSPALKKADIGVAMGIAGSDVSKQAADMILLDDNFASIVTGVEEGRLIFDNLKKSIAYTLTSNIPEISPFLLFIIANIPLPLGTVTILCIDLGTDMVPAISLAYEKAESDIMKRQPRNPKTDKLVNERLISIAYGQIGMMQATAGFFTYFVILAENGFLPMDLIGVRVLWDDKYVNDLEDSYGQQWTYERRKIVEYSCHTAFFASIVIVQWADLIICKTRRNSIVQQGMTNRILIFGLFEETALAAFLSYCPGMDVALRMYPMKPLWWFCAFPYSLLIFLYDEARRYILRRNPGGWVEKETYY.

Positions 1–5 (MGLGK) are excised as a propeptide. Over residues 1-11 (MGLGKGKDEYK) the composition is skewed to basic and acidic residues. The segment at 1–33 (MGLGKGKDEYKLAATSEDGGKKDKKAKAKKDMD) is disordered. Residues 6–87 (GKDEYKLAAT…NALTPPPTTP (82 aa)) lie on the Cytoplasmic side of the membrane. The residue at position 16 (Ser-16) is a Phosphoserine; by PKC. Residues 82–84 (PPP) are interaction with phosphoinositide-3 kinase. The helical transmembrane segment at 88 to 108 (EWVKFCKQLFGGFSMLLWIGA) threads the bilayer. The Extracellular segment spans residues 109 to 131 (ILCFLAYGIQAASEDEPANDNLY). Residues 132–152 (LGIVLSAVVIITGCFSYYQEA) form a helical membrane-spanning segment. Over 153–288 (KSSKIMESFK…GGKTPIAIEI (136 aa)) the chain is Cytoplasmic. Positions 216–237 (SSLTGESEPQTRSPDFSNENPL) are disordered. The helical transmembrane segment at 289–308 (EHFIHIITGVAVFLGVSFFI) threads the bilayer. Residues 309 to 320 (LSLILGYNWLEA) are Extracellular-facing. Residues 321-338 (VIFLIGIIVANVPEGLLA) traverse the membrane as a helical segment. Residues 339 to 772 (TVTVCLTLTA…EEGRLIFDNL (434 aa)) lie on the Cytoplasmic side of the membrane. Asp-376 acts as the 4-aspartylphosphate intermediate in catalysis. Lys-487 contributes to the ATP binding site. Residues Asp-717 and Asp-721 each contribute to the Mg(2+) site. The chain crosses the membrane as a helical span at residues 773–792 (KKSIAYTLTSNIPEISPFLL). Topologically, residues 793–802 (FIIANIPLPL) are extracellular. Residues 803 to 823 (GTVTILCIDLGTDMVPAISLA) form a helical membrane-spanning segment. Residues 824-843 (YEKAESDIMKRQPRNPKTDK) are Cytoplasmic-facing. The chain crosses the membrane as a helical span at residues 844–866 (LVNERLISIAYGQIGMMQATAGF). The Extracellular portion of the chain corresponds to 867–918 (FTYFVILAENGFLPMDLIGVRVLWDDKYVNDLEDSYGQQWTYERRKIVEYSC). Residues 919–938 (HTAFFASIVIVQWADLIICK) form a helical membrane-spanning segment. The Cytoplasmic segment spans residues 939–951 (TRRNSIVQQGMTN). Residue Ser-943 is modified to Phosphoserine; by PKA. The chain crosses the membrane as a helical span at residues 952–970 (RILIFGLFEETALAAFLSY). The Extracellular portion of the chain corresponds to 971–985 (CPGMDVALRMYPMKP). The chain crosses the membrane as a helical span at residues 986 to 1006 (LWWFCAFPYSLLIFLYDEARR). At 1007–1023 (YILRRNPGGWVEKETYY) the chain is on the cytoplasmic side.

The protein belongs to the cation transport ATPase (P-type) (TC 3.A.3) family. Type IIC subfamily. As to quaternary structure, the sodium/potassium-transporting ATPase is composed of a catalytic alpha subunit, an auxiliary non-catalytic beta subunit and an additional regulatory subunit.

It localises to the cell membrane. It is found in the sarcolemma. The enzyme catalyses K(+)(out) + Na(+)(in) + ATP + H2O = K(+)(in) + Na(+)(out) + ADP + phosphate + H(+). This is the catalytic component of the active enzyme, which catalyzes the hydrolysis of ATP coupled with the exchange of sodium and potassium ions across the plasma membrane. This action creates the electrochemical gradient of sodium and potassium ions, providing the energy for active transport of various nutrients. The sequence is that of Sodium/potassium-transporting ATPase subunit alpha-1 (atp1a1) from Oreochromis mossambicus (Mozambique tilapia).